Consider the following 243-residue polypeptide: BTB/POZ domain-containing protein At4g08455 (243 aa).

A coiled-coil region spans residues 19 to 51; that stretch reads KECYVEAGETEEELKREIDDLKAKVAFLRLSSS. Positions 64-136 constitute a BTB domain; the sequence is TDVVLIASED…LYTAEACLDE (73 aa).

As to quaternary structure, interacts with CUL3A and CUL3B.

The protein operates within protein modification; protein ubiquitination. In terms of biological role, may act as a substrate-specific adapter of an E3 ubiquitin-protein ligase complex (CUL3-RBX1-BTB) which mediates the ubiquitination and subsequent proteasomal degradation of target proteins. This Arabidopsis thaliana (Mouse-ear cress) protein is BTB/POZ domain-containing protein At4g08455.